The primary structure comprises 118 residues: uncharacterized protein (118 aa).

The segment at 1–118 (MASARGAKQS…AARQNEKTAR (118 aa)) is disordered. Positions 13-28 (RVGTTRYTETSTVRVE) are enriched in low complexity. Over residues 29–49 (TSSHRVETSSRRVETSQRRSE) the composition is skewed to basic and acidic residues.

This is an uncharacterized protein from Homo sapiens (Human).